Consider the following 165-residue polypeptide: Urease accessory protein UreE (165 aa).

The disordered stretch occupies residues 137-156; the sequence is EAGAYQSAPHGHSHAHGHDH.

Belongs to the UreE family.

The protein resides in the cytoplasm. In terms of biological role, involved in urease metallocenter assembly. Binds nickel. Probably functions as a nickel donor during metallocenter assembly. The sequence is that of Urease accessory protein UreE from Pseudomonas putida (strain GB-1).